The primary structure comprises 144 residues: Large ribosomal subunit protein uL11 (144 aa).

Belongs to the universal ribosomal protein uL11 family. As to quaternary structure, part of the ribosomal stalk of the 50S ribosomal subunit. Interacts with L10 and the large rRNA to form the base of the stalk. L10 forms an elongated spine to which L12 dimers bind in a sequential fashion forming a multimeric L10(L12)X complex. Post-translationally, one or more lysine residues are methylated.

Forms part of the ribosomal stalk which helps the ribosome interact with GTP-bound translation factors. This is Large ribosomal subunit protein uL11 from Parafrankia sp. (strain EAN1pec).